Consider the following 948-residue polypeptide: Puromycin-sensitive aminopeptidase (948 aa).

Substrate is bound by residues glutamate 206 and 341-345 (GAMEN). Zn(2+) is bound at residue histidine 377. Glutamate 378 serves as the catalytic Proton acceptor. Positions 381 and 400 each coordinate Zn(2+).

This sequence belongs to the peptidase M1 family. It depends on Zn(2+) as a cofactor. In terms of tissue distribution, expressed mainly in intestinal cells in the posterior part of the intestine and in amphid sensory neurons and nerve ring neurons. Expressed in neurons in the male tail. Expressed in mature spermatids (at protein level).

The protein resides in the cytoplasm. The protein localises to the cell cortex. Its subcellular location is the chromosome. It localises to the cytoskeleton. It is found in the spindle pole. It catalyses the reaction Release of an N-terminal amino acid, preferentially alanine, from a wide range of peptides, amides and arylamides.. Inhibited by chelating agent 1,10-phenanthroline, aminopeptidase inhibitors actinonin, amastatin, and leuhistin, and to a lesser extent by puromycin. In terms of biological role, aminopeptidase. Required for the exit from meiosis, probably upstream of cyclin cyb-3. Involved in the establishment of the anterior-posterior polarity at the embryonic 1-cell stage by regulating the dynamics of sperm-donated centrosomes. Plays a role in oocyte maturation. Required for embryonic development. This chain is Puromycin-sensitive aminopeptidase, found in Caenorhabditis elegans.